The following is a 353-amino-acid chain: Phosphate acyltransferase (353 aa).

The protein belongs to the PlsX family. In terms of assembly, homodimer. Probably interacts with PlsY.

It is found in the cytoplasm. The enzyme catalyses a fatty acyl-[ACP] + phosphate = an acyl phosphate + holo-[ACP]. Its pathway is lipid metabolism; phospholipid metabolism. In terms of biological role, catalyzes the reversible formation of acyl-phosphate (acyl-PO(4)) from acyl-[acyl-carrier-protein] (acyl-ACP). This enzyme utilizes acyl-ACP as fatty acyl donor, but not acyl-CoA. The sequence is that of Phosphate acyltransferase from Bradyrhizobium diazoefficiens (strain JCM 10833 / BCRC 13528 / IAM 13628 / NBRC 14792 / USDA 110).